We begin with the raw amino-acid sequence, 305 residues long: QLNATFYSGTCPNASAIVRSTIQQAFQSDTRIGASLIRLHFHDCFVDGCDASILLDDSGSIQSEKNAGPNANSARGFNVVDNIKTALENTCPGVVSCSDILALASEASVSLTGGPSWTVLLGRRDSLTANLAGANSAIPSPFEGLSNITSKFSAVGLNTNDLVALSGAHTFGRARCGVFNNRLFNFSGTNGPDPTLNSTLLSSLQQLCPQNGSASTITNLDLSTPDAFDNNYFANLQSNNGLLQSDQELFSTLGSATIAVVTSFASNQTLFFQAFAQSMINMGNISPLTGSNGEIRLDCKKVDGS.

Q1 carries the post-translational modification Pyrrolidone carboxylic acid. 2 N-linked (GlcNAc...) asparagine glycosylation sites follow: N3 and N13. 4 cysteine pairs are disulfide-bonded: C11/C91, C44/C49, C97/C299, and C176/C208. H42 (proton acceptor) is an active-site residue. Ca(2+) is bound by residues D43, V46, G48, D50, and S52. P139 contributes to the substrate binding site. A glycan (N-linked (GlcNAc...) asparagine) is linked at N147. Position 169 (H169) interacts with heme b. T170 is a binding site for Ca(2+). N185, N197, and N211 each carry an N-linked (GlcNAc...) asparagine glycan. Ca(2+) is bound by residues D221, T224, and D229. N267 carries an N-linked (GlcNAc...) asparagine glycan.

The protein belongs to the peroxidase family. Classical plant (class III) peroxidase subfamily. Ca(2+) is required as a cofactor. Heme b serves as cofactor.

It catalyses the reaction 2 a phenolic donor + H2O2 = 2 a phenolic radical donor + 2 H2O. In terms of biological role, removal of H(2)O(2), oxidation of toxic reductants, biosynthesis and degradation of lignin, suberization, auxin catabolism, response to environmental stresses such as wounding, pathogen attack and oxidative stress. These functions might be dependent on each isozyme/isoform in each plant tissue. This Armoracia rusticana (Horseradish) protein is Peroxidase A2 (HRPA2).